The sequence spans 1252 residues: DNA-directed RNA polymerase subunit beta (1252 aa).

Belongs to the RNA polymerase beta chain family. As to quaternary structure, the RNAP catalytic core consists of 2 alpha, 1 beta, 1 beta' and 1 omega subunit. When a sigma factor is associated with the core the holoenzyme is formed, which can initiate transcription.

The enzyme catalyses RNA(n) + a ribonucleoside 5'-triphosphate = RNA(n+1) + diphosphate. Its function is as follows. DNA-dependent RNA polymerase catalyzes the transcription of DNA into RNA using the four ribonucleoside triphosphates as substrates. The chain is DNA-directed RNA polymerase subunit beta from Chlamydia abortus (strain DSM 27085 / S26/3) (Chlamydophila abortus).